Here is a 291-residue protein sequence, read N- to C-terminus: Methylsterol monooxygenase 1 (291 aa).

The next 2 helical transmembrane spans lie at 55–75 and 100–120; these read LIVH…FQFL and MLLF…YYFT. The Fatty acid hydroxylase domain maps to 145-274; sequence CAVIEDTWHY…FTWWDRLFDT (130 aa). Residues 157–161 carry the Histidine box-1 motif; sequence HRALH. A Histidine box-2 motif is present at residues 170 to 174; the sequence is HKVHH. Residues 199–219 traverse the membrane as a helical segment; sequence FFIGTMVFCNHMILLWAWVTF. The short motif at 249–255 is the Histidine box-3 element; sequence FHDFHHM.

Belongs to the sterol desaturase family. The cofactor is Fe cation.

Its subcellular location is the endoplasmic reticulum membrane. The catalysed reaction is 4,4-dimethyl-5alpha-cholest-7-en-3beta-ol + 6 Fe(II)-[cytochrome b5] + 3 O2 + 5 H(+) = 4alpha-carboxy-4beta-methyl-5alpha-cholest-7-ene-3beta-ol + 6 Fe(III)-[cytochrome b5] + 4 H2O. It participates in steroid biosynthesis; zymosterol biosynthesis; zymosterol from lanosterol: step 3/6. Functionally, catalyzes the first step in the removal of the two C-4 methyl groups of 4,4-dimethylzymosterol. The protein is Methylsterol monooxygenase 1 (msmo1) of Danio rerio (Zebrafish).